Reading from the N-terminus, the 1017-residue chain is MSQGPPPGESSEPEAKVLHTKRLYRAVVEAVHRLDLILCNKAAYQEVFKPENVSLRNKLRELCVKLMFLHPVDYGRKAEELLWRKVYYEVIQLIKTNKKHIHSRSTLECAYRTHLVAGIGFYQHLLLYIQSHYQLELQCCIDWTHVTDPLMGFKKPVSASGKEMDWAQMACHRCLVYLGDLSRYQNELAGVDTELLAERFYYQALSVAPQIGMPFNQLGTLAGSKYYNVEAMYCYLRCIQSEVSFEGAYGNLKRLYDKAAKMYHQLKKSETRKLSPSKKRCKDIKRLLVNFMYLQSLLQPKSSSVDSELTSLCQSVLEDFNLCLFYLPSSPNLGLTNEDEEECESGYAFLPDLLIFQMAIICLMGVHSLKRAGSKHYSAAIAFTLALFSHLINHVNIRLQAELEEGENPVSAFQSDGTDEPESKEALEKEEPEPEPPTVVPQADEGRKSRKHSRLSCLRRRRRHHPPKAGDDSDLSEGFESDSSHDSAQASDGSDSGSDKSLEGRGTAFDAETDSEMNSQESRSDLEDMEDEEGTRSPAQEPPQARSEVPDSLNGPLGPSEASIASNLQAMSTQMFQTKRCFRLAPTFSNLLLQPTTEPNSVASHRPCVNGDMDKPLEPASEDGSESEGSESSNRSCRNERSLQEKLQALMAEGLLPAVKVFLDWLRTNPDLIIVCAQSSQSLWNRLSVLLNLLPASAELQDSGLALCSEVQGLLEGCELPDLPASLLLPEDMALRNLPPLRAAHRRFNFDADRPLLSALEESVVRICCIRSFGHFVARLQGSILQFNPEVGIFVSIAQSEQESLLQQAQAQFRMAEEEARRNRLMRDMAQLRLQLEVSQLEGSLQQPKAQSAMSPYLIPDTQALCYHLPLIRQLATSGRFIIIIPRTVIDGLDLLKKEQPGARDGIRYLEAEFKKGNRYIRCQKEVGKSFERHKLKRQDADAWTLYKILDSCRQLTLAQGAGEEDPSGMVTIITGLHLDSPSALSGPMQAALQAAAHASVDVKNVLDFYRQWKEIG.

Serine 2 is subject to N-acetylserine. Residues serine 2 and serine 423 each carry the phosphoserine modification. Disordered regions lie at residues 406 to 562 (GENP…PSEA) and 597 to 640 (TEPN…CRNE). The span at 448–467 (KSRKHSRLSCLRRRRRHHPP) shows a compositional bias: basic residues. Low complexity predominate over residues 486-496 (DSAQASDGSDS). Residues 620 to 629 (ASEDGSESEG) are compositionally biased toward acidic residues. Residues 798–842 (AQSEQESLLQQAQAQFRMAEEEARRNRLMRDMAQLRLQLEVSQLE) are a coiled coil. The PINc domain maps to 873–996 (RQLATSGRFI…GPMQAALQAA (124 aa)).

Interacts with TERT, PPP2CA and SMG1. Part of a complex that contains SMG1, SMG5, SMG7, PPP2CA, a short isoform of UPF3A (isoform UPF3AS, but not isoform UPF3AL) and phosphorylated UPF1. Not detected in complexes that contain unphosphorylated UPF1.

It is found in the cytoplasm. Its subcellular location is the nucleus. In terms of biological role, plays a role in nonsense-mediated mRNA decay. Does not have RNase activity by itself. Promotes dephosphorylation of UPF1. Together with SMG7 is thought to provide a link to the mRNA degradation machinery involving exonucleolytic pathways, and to serve as an adapter for UPF1 to protein phosphatase 2A (PP2A), thereby triggering UPF1 dephosphorylation. Necessary for TERT activity. This Mus musculus (Mouse) protein is Nonsense-mediated mRNA decay factor SMG5.